Here is a 342-residue protein sequence, read N- to C-terminus: Homocysteine S-methyltransferase 4 (342 aa).

The 316-residue stretch at 13–328 (ALRGFVREAG…ATVRAIARAV (316 aa)) folds into the Hcy-binding domain. The Zn(2+) site is built by C245, C313, and C314.

Monomer. The cofactor is Zn(2+).

The enzyme catalyses S-methyl-L-methionine + L-homocysteine = 2 L-methionine + H(+). Its function is as follows. Catalyzes methyl transfer from S-methylmethionine (SMM) to adenosyl-L-homocysteine (AdoMet). SMM degradation (by HMT-1, HMT-2, HMT-3 and HMT-4) and biosynthesis (by MMT1) constitute the SMM cycle in plants, which is probably required to achieve short term control of AdoMet level. This is Homocysteine S-methyltransferase 4 (HMT-4) from Zea mays (Maize).